We begin with the raw amino-acid sequence, 489 residues long: 6-phosphogluconate dehydrogenase, decarboxylating 1 (489 aa).

NADP(+) is bound by residues 9–14 and 32–34; these read GLAVMG and NRT. S50 is modified (phosphoserine). NADP(+) contacts are provided by residues 74–76 and N102; that span reads VKA. Residues N102 and 128–130 contribute to the substrate site; that span reads SGG. K182 serves as the catalytic Proton acceptor. 185–186 lines the substrate pocket; it reads HN. E189 acts as the Proton donor in catalysis. Substrate is bound by residues Y190, K259, R286, R446, and H452.

It belongs to the 6-phosphogluconate dehydrogenase family. As to quaternary structure, homodimer.

Its subcellular location is the cytoplasm. It carries out the reaction 6-phospho-D-gluconate + NADP(+) = D-ribulose 5-phosphate + CO2 + NADPH. It participates in carbohydrate degradation; pentose phosphate pathway; D-ribulose 5-phosphate from D-glucose 6-phosphate (oxidative stage): step 3/3. Its function is as follows. Catalyzes the oxidative decarboxylation of 6-phosphogluconate to ribulose 5-phosphate and CO(2), with concomitant reduction of NADP to NADPH. The polypeptide is 6-phosphogluconate dehydrogenase, decarboxylating 1 (GND1) (Saccharomyces cerevisiae (strain ATCC 204508 / S288c) (Baker's yeast)).